Reading from the N-terminus, the 288-residue chain is UTP--glucose-1-phosphate uridylyltransferase (288 aa).

Belongs to the UDPGP type 2 family.

The catalysed reaction is alpha-D-glucose 1-phosphate + UTP + H(+) = UDP-alpha-D-glucose + diphosphate. It functions in the pathway glycolipid metabolism; diglucosyl-diacylglycerol biosynthesis. In terms of biological role, catalyzes the formation of UDP-glucose from glucose-1-phosphate and UTP. This is an intermediate step in the biosynthesis of diglucosyl-diacylglycerol (Glc2-DAG), i.e. the predominant glycolipid found in the S.aureus membrane, which is also used as a membrane anchor for lipoteichoic acid (LTA). This Staphylococcus aureus (strain MSSA476) protein is UTP--glucose-1-phosphate uridylyltransferase (gtaB).